A 1448-amino-acid polypeptide reads, in one-letter code: DNA primase TraC (1448 aa).

Composition is skewed to basic and acidic residues over residues 844–856 (ARVQEERVRRDPN), 863–872 (SAAKEARKTA), and 882–898 (DAQRRAAELERQERDRQ). Disordered stretches follow at residues 844–915 (ARVQ…INVP) and 952–982 (QGAATAAVEPRSAQPAPEAQGEAQKPAQQAQ). Positions 964–982 (AQPAPEAQGEAQKPAQQAQ) are enriched in low complexity. Residues 1237–1325 (PALVISEGYA…GKAIFPIFAP (89 aa)) form the Toprim domain. Positions 1414-1448 (ISQVQRDEQQHQEQKHVEKKQQQIEQRPRRAARIG) are disordered. Residues 1418–1441 (QRDEQQHQEQKHVEKKQQQIEQRP) show a composition bias toward basic and acidic residues.

Its function is as follows. Required for autonomous replication in E.coli. Transferred into the recipient cell during bacterial conjugation. Catalyzes the synthesis of short oligoribonucleotide primers with CpA or pCpA at their 5'-termini on a single-stranded template DNA. This chain is DNA primase TraC (traC), found in Escherichia coli.